The sequence spans 182 residues: ATP-dependent protease subunit HslV (182 aa).

The active site involves T12. Na(+) is bound by residues A167, C170, and T173.

It belongs to the peptidase T1B family. HslV subfamily. As to quaternary structure, a double ring-shaped homohexamer of HslV is capped on each side by a ring-shaped HslU homohexamer. The assembly of the HslU/HslV complex is dependent on binding of ATP.

The protein resides in the cytoplasm. The enzyme catalyses ATP-dependent cleavage of peptide bonds with broad specificity.. Its activity is regulated as follows. Allosterically activated by HslU binding. In terms of biological role, protease subunit of a proteasome-like degradation complex believed to be a general protein degrading machinery. This is ATP-dependent protease subunit HslV from Chlorobium limicola (strain DSM 245 / NBRC 103803 / 6330).